Consider the following 82-residue polypeptide: Putative membrane protein insertion efficiency factor (82 aa).

Belongs to the UPF0161 family.

It localises to the cell inner membrane. Functionally, could be involved in insertion of integral membrane proteins into the membrane. This Colwellia psychrerythraea (strain 34H / ATCC BAA-681) (Vibrio psychroerythus) protein is Putative membrane protein insertion efficiency factor.